Consider the following 219-residue polypeptide: Small ribosomal subunit protein uS3c (219 aa).

Residues 43–118 enclose the KH type-2 domain; that stretch reads IKNYVQNNMI…KLNITITRIE (76 aa).

It belongs to the universal ribosomal protein uS3 family. Part of the 30S ribosomal subunit.

It is found in the plastid. The sequence is that of Small ribosomal subunit protein uS3c (rps3) from Cuscuta exaltata (Tall dodder).